The sequence spans 381 residues: Alkanesulfonate monooxygenase (381 aa).

Belongs to the SsuD family. In terms of assembly, homotetramer.

The enzyme catalyses an alkanesulfonate + FMNH2 + O2 = an aldehyde + FMN + sulfite + H2O + 2 H(+). Functionally, catalyzes the desulfonation of aliphatic sulfonates. This Shigella flexneri protein is Alkanesulfonate monooxygenase.